The following is a 141-amino-acid chain: MVDHARAARMAKRIQQIVATAIERQIKDPRLEFVTITDARVTGDLHDATVFYTVRGKTVDAEPDTATAEAALAKATGQLRKIVGDQLSVRFTPTLSFSLDTVPEASAHFEELLARAKAQDEALRAQSAGARPAGDEDPYKP.

The segment at 120–141 (DEALRAQSAGARPAGDEDPYKP) is disordered.

Belongs to the RbfA family. As to quaternary structure, monomer. Binds 30S ribosomal subunits, but not 50S ribosomal subunits or 70S ribosomes.

The protein resides in the cytoplasm. In terms of biological role, one of several proteins that assist in the late maturation steps of the functional core of the 30S ribosomal subunit. Associates with free 30S ribosomal subunits (but not with 30S subunits that are part of 70S ribosomes or polysomes). Required for efficient processing of 16S rRNA. May interact with the 5'-terminal helix region of 16S rRNA. The chain is Ribosome-binding factor A from Corynebacterium jeikeium (strain K411).